Reading from the N-terminus, the 291-residue chain is Kynurenine formamidase (291 aa).

The short motif at 33 to 37 is the HGGXW element; sequence HGGAW. Residue S107 is the Nucleophile of the active site. Residues D242 and H280 contribute to the active site.

It belongs to the kynurenine formamidase family. As to quaternary structure, homodimer.

It catalyses the reaction N-formyl-L-kynurenine + H2O = L-kynurenine + formate + H(+). It participates in amino-acid degradation; L-tryptophan degradation via kynurenine pathway; L-kynurenine from L-tryptophan: step 2/2. Its function is as follows. Catalyzes the hydrolysis of N-formyl-L-kynurenine to L-kynurenine, the second step in the kynurenine pathway of tryptophan degradation. Kynurenine may be further oxidized to nicotinic acid, NAD(H) and NADP(H). Required for elimination of toxic metabolites. This Debaryomyces hansenii (strain ATCC 36239 / CBS 767 / BCRC 21394 / JCM 1990 / NBRC 0083 / IGC 2968) (Yeast) protein is Kynurenine formamidase.